We begin with the raw amino-acid sequence, 247 residues long: Cell division protein ZapD (247 aa).

It belongs to the ZapD family. In terms of assembly, interacts with FtsZ.

Its subcellular location is the cytoplasm. Its function is as follows. Cell division factor that enhances FtsZ-ring assembly. Directly interacts with FtsZ and promotes bundling of FtsZ protofilaments, with a reduction in FtsZ GTPase activity. The sequence is that of Cell division protein ZapD from Escherichia fergusonii (strain ATCC 35469 / DSM 13698 / CCUG 18766 / IAM 14443 / JCM 21226 / LMG 7866 / NBRC 102419 / NCTC 12128 / CDC 0568-73).